The chain runs to 423 residues: Histidine--tRNA ligase (423 aa).

This sequence belongs to the class-II aminoacyl-tRNA synthetase family. As to quaternary structure, homodimer.

It localises to the cytoplasm. The enzyme catalyses tRNA(His) + L-histidine + ATP = L-histidyl-tRNA(His) + AMP + diphosphate + H(+). In Mycobacterium bovis (strain ATCC BAA-935 / AF2122/97), this protein is Histidine--tRNA ligase (hisS).